We begin with the raw amino-acid sequence, 244 residues long: Na(+)-translocating NADH-quinone reductase subunit E (244 aa).

6 consecutive transmembrane segments (helical) span residues 11 to 31 (LLGIFLQATFIQNILLSTFLG), 50 to 70 (MSVALVLTITGSINWLVHYFI), 90 to 110 (FLELIMFIVVIAAFTQILELL), 123 to 143 (GIFLPLIAVNCAILGGVLFGI), 153 to 173 (VVFSLGSGCGWWLAIVLFATI), and 191 to 211 (ISFITTGLMAMAFMGLTGIDI).

Belongs to the NqrDE/RnfAE family. In terms of assembly, composed of six subunits; NqrA, NqrB, NqrC, NqrD, NqrE and NqrF.

The protein localises to the cell inner membrane. The catalysed reaction is a ubiquinone + n Na(+)(in) + NADH + H(+) = a ubiquinol + n Na(+)(out) + NAD(+). Its function is as follows. NQR complex catalyzes the reduction of ubiquinone-1 to ubiquinol by two successive reactions, coupled with the transport of Na(+) ions from the cytoplasm to the periplasm. NqrA to NqrE are probably involved in the second step, the conversion of ubisemiquinone to ubiquinol. This chain is Na(+)-translocating NADH-quinone reductase subunit E, found in Chlamydia trachomatis serovar L2 (strain ATCC VR-902B / DSM 19102 / 434/Bu).